A 337-amino-acid chain; its full sequence is Probable allantoicase 1 (337 aa).

The protein belongs to the allantoicase family.

The enzyme catalyses allantoate + H2O = (S)-ureidoglycolate + urea. The protein operates within nitrogen metabolism; (S)-allantoin degradation; (S)-ureidoglycolate from allantoate (aminidohydrolase route): step 1/1. In Burkholderia mallei (strain ATCC 23344), this protein is Probable allantoicase 1.